A 696-amino-acid polypeptide reads, in one-letter code: MIVGYSVFFHHTVTRRTWCAVTIFFCRQRNVNSAMIRAISIRWLLQRPGDKRHSAWLVARSKSLLVRNLSTTNQVKGETEEPSQADLLREFAHMPVERIRNFSIIAHVDHGKSTLADRLLELTGAIARNGGQHQVLDNLQVERERGITVKAQTASIFHRHKGQLYLLNLIDTPGHVDFSNEVSRSLAACDGVVLLVDACHGVQAQTVANYHLAKQRQLAVVPVLNKIDIKHANPDQVCQDLKLLFGIDPDEVLRVSAKLGTGVSEVLERVIETVPPPQVQRDSDFRALIFDSWFDKYRGALNLIYVLNGKLEQNQDIQSLATKKVYSVKSISVLRPAECPVPDVSAGQVGLIACNMRNSKESIVGDTIHLKNQAVAAAGSYRPQQPLVFAGVFPADQSKHVALRSAIDKMVLNDSAVTVKIDSSPALGQGWRLGFLGLLHMEVFCQRLEQEHGAEPIITAPSVTYRLVLSNPKMIKQQGRDTMDISNAALFPEPHSIKEYYEPLVLGTIITPTEYVGQVISLCVERRGLQQSSVNIDDTRVLMKYVLPLSEIILDFHDRLKSLSSGYASFSYEDHGYHPSHLVRLDIHLNGKPVEELCRIVHVSKATGVARQMVLKLRELIPKQMVQIAIQACVGSKVLARETIKAYRKDVTAKLYGGDVTRRMKLLKQQAEGKKKMRMFANIRVPHETFINVLKR.

Residues 1 to 76 constitute a mitochondrion transit peptide; sequence MIVGYSVFFH…RNLSTTNQVK (76 aa). Positions 97–278 constitute a tr-type G domain; that stretch reads ERIRNFSIIA…RVIETVPPPQ (182 aa). Residues 106–113, 171–175, and 225–228 each bind GTP; these read AHVDHGKS, DTPGH, and NKID.

It belongs to the TRAFAC class translation factor GTPase superfamily. Classic translation factor GTPase family. LepA subfamily.

The protein resides in the mitochondrion inner membrane. The enzyme catalyses GTP + H2O = GDP + phosphate + H(+). Functionally, promotes mitochondrial protein synthesis. May act as a fidelity factor of the translation reaction, by catalyzing a one-codon backward translocation of tRNAs on improperly translocated ribosomes. Binds to mitochondrial ribosomes in a GTP-dependent manner. In Drosophila melanogaster (Fruit fly), this protein is Translation factor waclaw, mitochondrial.